A 423-amino-acid chain; its full sequence is UPF0229 protein VV1_2091 (423 aa).

Residues 81–111 are disordered; sequence QFITGDKIERPKGGQGGGGAGDGDASADGEG. Positions 93–102 are enriched in gly residues; sequence GGQGGGGAGD.

This sequence belongs to the UPF0229 family.

This is UPF0229 protein VV1_2091 from Vibrio vulnificus (strain CMCP6).